The following is a 462-amino-acid chain: Protoheme IX farnesyltransferase, mitochondrial (462 aa).

The N-terminal 30 residues, 1 to 30, are a transit peptide targeting the mitochondrion; sequence MSYFPRTYAHLMRNVLAHNKGNIYLQIGTQ. Helical transmembrane passes span 158–178, 234–254, 274–294, 298–318, 352–372, 373–393, and 425–445; these read TILV…PASV, LIGT…VAIL, IINT…GWAA, LSHP…FPHF, YSIL…TDWY, YQID…KFYW, and FMAS…HKKG.

It belongs to the UbiA prenyltransferase family. Forms ~370 kDa homooligomeric complexes.

The protein localises to the mitochondrion. It localises to the mitochondrion membrane. The enzyme catalyses heme b + (2E,6E)-farnesyl diphosphate + H2O = Fe(II)-heme o + diphosphate. It functions in the pathway porphyrin-containing compound metabolism; heme O biosynthesis; heme O from protoheme: step 1/1. Its activity is regulated as follows. Positively regulated by the hydroxylated intermediate (heme I) formed at the subsequent step, or by HAS/COX15 itself. In terms of biological role, catalyzes the first reaction in the biosynthesis of heme A, a prosthetic group of mitochondrial cytochrome c oxidase (CcO). Heme A is synthesized from heme B by two sequential enzymatic reactions catalyzed by heme O synthase (HOS/COX10) and heme A synthase (HAS/COX15). HOS converts heme B (protoheme IX) to heme O by substitution of the vinyl group on carbon 2 of heme B porphyrin ring with a hydroxyethyl farnesyl side group. The protein is Protoheme IX farnesyltransferase, mitochondrial (COX10) of Saccharomyces cerevisiae (strain ATCC 204508 / S288c) (Baker's yeast).